The chain runs to 571 residues: MTILPKKKPPPPDADPANEPPPPGPMPPAPRRGGGVGVGGGGTGVGGGDRDRDSGVVGARPRASPPPQGPLPGPPGALHRWALAVPPGAVAGPRPQQASPPPCGGPGGPGGGPGDALGAAAAGVGAAGVVVGVGGAVGVGGCCSGPGHSKRRRQAPGVGAVGGGSPEREEVGAGYNSEDEYEAAAARIEAMDPATVEQQEHWFEKALRDKKGFIIKQMKEDGACLFRAVADQVYGDQDMHEVVRKHCMDYLMKNADYFSNYVTEDFTTYINRKRKNNCHGNHIEMQAMAEMYNRPVEVYQYSTGTSAVEPINTFHGIHQNEDEPIRVSYHRNIHYNSVVNPNKATIGVGLGLPSFKPGFAEQSLMKNAIKTSEESWIEQQMLEDKKRATDWEATNEAIEEQVARESYLQWLRDQEKQARQVRGPSQPRKASATCSSATAAASSGLEEWTSRSPRQRSSASSPEHPELHAELGMKPPSPGTVLALAKPPSPCAPGTSSQFSAGADRATSPLVSLYPALECRALIQQMSPSAFGLNDWDDDEILASVLAVSQQEYLDSMKKNKVHRDPPPDKS.

Disordered stretches follow at residues 1–111 and 146–175; these read MTIL…GPGG and PGHS…GAGY. The span at 11–30 shows a compositional bias: pro residues; sequence PPDADPANEPPPPGPMPPAP. The segment covering 32 to 47 has biased composition (gly residues); it reads RGGGVGVGGGGTGVGG. Residues 63-75 are compositionally biased toward pro residues; sequence ASPPPQGPLPGPP. Ser64 is modified (phosphoserine). The segment covering 84 to 97 has biased composition (low complexity); it reads AVPPGAVAGPRPQQ. Ser165 carries the post-translational modification Phosphoserine. The residue at position 175 (Tyr175) is a Phosphotyrosine. Position 177 is a phosphoserine (Ser177). Thr195 is subject to Phosphothreonine. Positions 213 to 341 constitute an OTU domain; sequence FIIKQMKEDG…NIHYNSVVNP (129 aa). A cys-loop region spans residues 218–224; the sequence is MKEDGAC. Asp221 is an active-site residue. Cys224 functions as the Nucleophile in the catalytic mechanism. A variable-loop region spans residues 273 to 283; sequence KRKNNCHGNHI. A Phosphoserine; by MTOR modification is found at Ser328. The his-loop stretch occupies residues 329-334; that stretch reads YHRNIH. His334 is an active-site residue. Phosphoserine occurs at positions 337 and 375. The interval 418–502 is disordered; sequence ARQVRGPSQP…PGTSSQFSAG (85 aa). Low complexity-rich tracts occupy residues 430-443 and 450-462; these read ASAT…AASS and SRSP…ASSP. Ser452 carries the phosphoserine modification. The residue at position 507 (Thr507) is a Phosphothreonine. Phosphoserine; by MTOR is present on Ser508.

It belongs to the peptidase C85 family. As to quaternary structure, interacts with TRAF3. Phosphorylation at Ser-177 is required for deubiquitinating activity. Phosphorylation at Ser-328, Ser-337 and Ser-508 by MTOR promotes its activity. Expressed in various tissues, including the liver and placenta, as well as in peripheral blood leukocytes.

The protein resides in the nucleus. It catalyses the reaction Thiol-dependent hydrolysis of ester, thioester, amide, peptide and isopeptide bonds formed by the C-terminal Gly of ubiquitin (a 76-residue protein attached to proteins as an intracellular targeting signal).. With respect to regulation, inhibited by N-ethyl-maleimide (NEM). Its function is as follows. Deubiquitinating enzyme that functions as a negative regulator of the innate immune system. Has peptidase activity towards 'Lys-48'- and 'Lys-63'-linked polyubiquitin chains. Can also cleave 'Lys-11'-linked ubiquitin chains (in vitro). Acts via TRAF3 deubiquitination and subsequent suppression of type I interferon (IFN) production. Controls neuroectodermal differentiation through cleaving 'Lys-48'-linked ubiquitin chains to counteract degradation of select chromatin regulators such as ARID1A, HDAC2 and HCF1. Acts as a positive regulator of mTORC1 and mTORC2 signaling following phosphorylation by MTOR: acts by mediating deubiquitination of BTRC, leading to its stability. This is OTU domain-containing protein 5 from Homo sapiens (Human).